The chain runs to 439 residues: 26S rRNA (cytosine-C(5))-methyltransferase nsun-5 (439 aa).

S-adenosyl-L-methionine-binding residues include D266, D293, and D313. The active-site Nucleophile is C366.

It belongs to the class I-like SAM-binding methyltransferase superfamily. RsmB/NOP family.

The enzyme catalyses a cytidine in 26S rRNA + S-adenosyl-L-methionine = a 5-methylcytidine in 26S rRNA + S-adenosyl-L-homocysteine + H(+). In terms of biological role, S-adenosyl-L-methionine-dependent methyltransferase which methylates the carbon-5 position of cytosine 2381 to 5-methylcytosine (m5C2381) in 26S rRNA. Plays a role in the production of mature 5S, 5.8S, 18S and 26S rRNAs and promotes the processing of the internally transcribed spacer 2 (ITS2), which separates the 5.8S and 26S rRNAs on large pre-rRNA precursors. May play a role in the translation of leucine and proline codons. May play a role in maintaining ribosomal frameshifting in response to osmotic stress. Not required for global translation. The chain is 26S rRNA (cytosine-C(5))-methyltransferase nsun-5 from Caenorhabditis elegans.